Reading from the N-terminus, the 311-residue chain is MALPIIIDCDPGHDDAIALVLALASPELEVKAITSSAGNQTPEKTLRNVLRMLTLLKRPDIPVAGGAVKPLMRELIIADNVHGESGLDGPALPEPSFAPQSGTAVELMAKTLRESAQPVTIVSTGPQTNVALLLNSHPELHTKIARIVIMGGAMGLGNWTPAAEFNIYVDPEAAEIVFQSGIPVVMAGLDVTHKAQIHAADIERFRDIGNPISTIVAELLDFFFEYHKDEKWGFVGAPLHDPCTIAWLLKPEIFTTVERWVGVETKGKYTQGMTVVDYYFLTGNKPNATVMVDVDRQGFVDLLAERLQYYA.

The active site involves His240.

It belongs to the IUNH family. RihA subfamily.

Its function is as follows. Hydrolyzes cytidine or uridine to ribose and cytosine or uracil, respectively. This is Pyrimidine-specific ribonucleoside hydrolase RihA from Salmonella paratyphi C (strain RKS4594).